Reading from the N-terminus, the 119-residue chain is UPF0102 protein PM0647 (119 aa).

It belongs to the UPF0102 family.

This is UPF0102 protein PM0647 from Pasteurella multocida (strain Pm70).